The sequence spans 263 residues: 4-hydroxy-2-oxo-heptane-1,7-dioate aldolase (263 aa).

The active-site Proton acceptor is His45. Gln147 is a binding site for substrate. Residue Glu149 coordinates a divalent metal cation. Substrate contacts are provided by Ala174 and Asp175. Asp175 lines the a divalent metal cation pocket.

It belongs to the HpcH/HpaI aldolase family. In terms of assembly, homohexamer; trimer of dimers. A divalent metal cation serves as cofactor.

The catalysed reaction is 4-hydroxy-2-oxoheptanedioate = succinate semialdehyde + pyruvate. Its pathway is aromatic compound metabolism; 4-hydroxyphenylacetate degradation; pyruvate and succinate semialdehyde from 4-hydroxyphenylacetate: step 7/7. Catalyzes the reversible retro-aldol cleavage of 4-hydroxy-2-ketoheptane-1,7-dioate (HKHD) to pyruvate and succinic semialdehyde. This Salmonella choleraesuis (strain SC-B67) protein is 4-hydroxy-2-oxo-heptane-1,7-dioate aldolase.